The following is a 234-amino-acid chain: Phosphoribosylaminoimidazole-succinocarboxamide synthase (234 aa).

It belongs to the SAICAR synthetase family.

The catalysed reaction is 5-amino-1-(5-phospho-D-ribosyl)imidazole-4-carboxylate + L-aspartate + ATP = (2S)-2-[5-amino-1-(5-phospho-beta-D-ribosyl)imidazole-4-carboxamido]succinate + ADP + phosphate + 2 H(+). The protein operates within purine metabolism; IMP biosynthesis via de novo pathway; 5-amino-1-(5-phospho-D-ribosyl)imidazole-4-carboxamide from 5-amino-1-(5-phospho-D-ribosyl)imidazole-4-carboxylate: step 1/2. The sequence is that of Phosphoribosylaminoimidazole-succinocarboxamide synthase from Clostridium botulinum (strain Langeland / NCTC 10281 / Type F).